Reading from the N-terminus, the 450-residue chain is Phosphoglucosamine mutase (450 aa).

The active-site Phosphoserine intermediate is Ser-103. Mg(2+) is bound by residues Ser-103, Asp-243, Asp-245, and Asp-247. Position 103 is a phosphoserine (Ser-103).

The protein belongs to the phosphohexose mutase family. It depends on Mg(2+) as a cofactor. In terms of processing, activated by phosphorylation.

It carries out the reaction alpha-D-glucosamine 1-phosphate = D-glucosamine 6-phosphate. Its function is as follows. Catalyzes the conversion of glucosamine-6-phosphate to glucosamine-1-phosphate. In Lactobacillus delbrueckii subsp. bulgaricus (strain ATCC BAA-365 / Lb-18), this protein is Phosphoglucosamine mutase.